The chain runs to 245 residues: MLLLDKINELKKIVAESSSIVFFGGAGVSTESNIPDFRSENGLYKTKNNFSYPPEVMLSHTFFKNHTEDFFEFYREKMIFKDAKPNAAHYSLAKIEEQGKLKAIVTQNIDGLHQLAGSKNVYELHGSIHRNYCMDCGKSFDLEYVIKSETTIPKCDKCGGIVKPDVVLYEEGLDDSIIQNSVKAISEADTLIVGGTSLVVYPAAGLIRYFKGNKLILINKSATAYDNEADLVISDSIGKVLETVI.

The Deacetylase sirtuin-type domain maps to 1 to 245 (MLLLDKINEL…SIGKVLETVI (245 aa)). NAD(+)-binding residues include alanine 26, threonine 30, phenylalanine 37, arginine 38, glutamine 107, isoleucine 109, aspartate 110, and histidine 125. Phenylalanine 37 is a binding site for nicotinamide. Nicotinamide contacts are provided by isoleucine 109 and aspartate 110. Catalysis depends on histidine 125, which acts as the Proton acceptor. 4 residues coordinate Zn(2+): cysteine 133, cysteine 136, cysteine 155, and cysteine 158. Residues threonine 196, serine 197, asparagine 219, and isoleucine 237 each contribute to the NAD(+) site.

It belongs to the sirtuin family. Class U subfamily. It depends on Zn(2+) as a cofactor.

The protein resides in the cytoplasm. The catalysed reaction is N(6)-acetyl-L-lysyl-[protein] + NAD(+) + H2O = 2''-O-acetyl-ADP-D-ribose + nicotinamide + L-lysyl-[protein]. NAD-dependent protein deacetylase which modulates the activities of several enzymes which are inactive in their acetylated form. In Clostridium acetobutylicum (strain ATCC 824 / DSM 792 / JCM 1419 / IAM 19013 / LMG 5710 / NBRC 13948 / NRRL B-527 / VKM B-1787 / 2291 / W), this protein is NAD-dependent protein deacetylase.